Consider the following 702-residue polypeptide: Phosphoribosylformylglycinamidine synthase subunit PurL (702 aa).

His-36 is an active-site residue. Residues Tyr-39 and Lys-80 each coordinate ATP. A Mg(2+)-binding site is contributed by Glu-82. Residues 83–86 (SHNH) and Arg-105 contribute to the substrate site. The active-site Proton acceptor is His-84. Residue Asp-106 coordinates Mg(2+). Gln-225 is a substrate binding site. Mg(2+) is bound at residue Asp-251. 293–295 (ETQ) provides a ligand contact to substrate. The ATP site is built by Asp-468 and Gly-505. Ser-508 contacts substrate.

This sequence belongs to the FGAMS family. As to quaternary structure, monomer. Part of the FGAM synthase complex composed of 1 PurL, 1 PurQ and 2 PurS subunits.

Its subcellular location is the cytoplasm. The catalysed reaction is N(2)-formyl-N(1)-(5-phospho-beta-D-ribosyl)glycinamide + L-glutamine + ATP + H2O = 2-formamido-N(1)-(5-O-phospho-beta-D-ribosyl)acetamidine + L-glutamate + ADP + phosphate + H(+). Its pathway is purine metabolism; IMP biosynthesis via de novo pathway; 5-amino-1-(5-phospho-D-ribosyl)imidazole from N(2)-formyl-N(1)-(5-phospho-D-ribosyl)glycinamide: step 1/2. Part of the phosphoribosylformylglycinamidine synthase complex involved in the purines biosynthetic pathway. Catalyzes the ATP-dependent conversion of formylglycinamide ribonucleotide (FGAR) and glutamine to yield formylglycinamidine ribonucleotide (FGAM) and glutamate. The FGAM synthase complex is composed of three subunits. PurQ produces an ammonia molecule by converting glutamine to glutamate. PurL transfers the ammonia molecule to FGAR to form FGAM in an ATP-dependent manner. PurS interacts with PurQ and PurL and is thought to assist in the transfer of the ammonia molecule from PurQ to PurL. This is Phosphoribosylformylglycinamidine synthase subunit PurL from Metallosphaera sedula (strain ATCC 51363 / DSM 5348 / JCM 9185 / NBRC 15509 / TH2).